Here is a 539-residue protein sequence, read N- to C-terminus: Heparanase-like protein 2 (539 aa).

A signal peptide spans 1 to 21 (MGFNVVVFLSCLLLLPPVTFG). N-linked (GlcNAc...) asparagine glycans are attached at residues N143, N163, and N181. E198 functions as the Proton donor in the catalytic mechanism. N-linked (GlcNAc...) asparagine glycosylation occurs at N300. The active-site Nucleophile is the E316. N421 carries N-linked (GlcNAc...) asparagine glycosylation.

The protein belongs to the glycosyl hydrolase 79 family.

The protein resides in the lysosome membrane. The protein localises to the secreted. Functionally, endoglycosidase which is a cell surface and extracellular matrix-degrading enzyme. Cleaves heparan sulfate proteoglycans (HSPGs) into heparan sulfate side chains and core proteoglycans. In Arabidopsis thaliana (Mouse-ear cress), this protein is Heparanase-like protein 2.